Reading from the N-terminus, the 65-residue chain is Large ribosomal subunit protein uL29 (65 aa).

The protein belongs to the universal ribosomal protein uL29 family.

This Methylococcus capsulatus (strain ATCC 33009 / NCIMB 11132 / Bath) protein is Large ribosomal subunit protein uL29.